The primary structure comprises 880 residues: Alanine--tRNA ligase (880 aa).

Positions 569, 573, 671, and 675 each coordinate Zn(2+).

It belongs to the class-II aminoacyl-tRNA synthetase family. As to quaternary structure, homotetramer. The cofactor is Zn(2+).

It is found in the cytoplasm. The catalysed reaction is tRNA(Ala) + L-alanine + ATP = L-alanyl-tRNA(Ala) + AMP + diphosphate. Catalyzes the attachment of alanine to tRNA(Ala) in a two-step reaction: alanine is first activated by ATP to form Ala-AMP and then transferred to the acceptor end of tRNA(Ala). Also edits incorrectly charged Ser-tRNA(Ala) and Gly-tRNA(Ala) via its editing domain. In Buchnera aphidicola subsp. Baizongia pistaciae (strain Bp), this protein is Alanine--tRNA ligase.